The primary structure comprises 361 residues: MDIQMANNFTPPSATPQGNDCDLYAHHSTARIVMPLHYSLVFIIGLVGNLLALVVIVQNRKKINSTTLYSTNLVISDILFTTALPTRIAYYAMGFDWRIGDALCRITALVFYINTYAGVNFMTCLSIDRFIAVVHPLRYNKIKRIEHAKGVCIFVWILVFAQTLPLLINPMSKQEAERITCMEYPNFEETKSLPWILLGACFIGYVLPLIIILICYSQICCKLFRTAKQNPLTEKSGVNKKALNTIILIIVVFVLCFTPYHVAIIQHMIKKLRFSNFLECSQRHSFQISLHFTVCLMNFNCCMDPFIYFFACKGYKRKVMRMLKRQVSVSISSAVKSAPEENSREMTETQMMIHSKSSNGK.

Residues 1–31 (MDIQMANNFTPPSATPQGNDCDLYAHHSTAR) are Extracellular-facing. Residues 32 to 57 (IVMPLHYSLVFIIGLVGNLLALVVIV) traverse the membrane as a helical segment. At 58–77 (QNRKKINSTTLYSTNLVISD) the chain is on the cytoplasmic side. A helical membrane pass occupies residues 78-95 (ILFTTALPTRIAYYAMGF). Position 87 (arginine 87) interacts with 7alpha,25-dihydroxycholesterol. Residues 96-105 (DWRIGDALCR) are Extracellular-facing. Cysteines 104 and 181 form a disulfide. The chain crosses the membrane as a helical span at residues 106–127 (ITALVFYINTYAGVNFMTCLSI). Positions 112 and 116 each coordinate 7alpha,25-dihydroxycholesterol. Positions 126-134 (SIDRFIAVV) are interaction with G proteins. The Cytoplasmic segment spans residues 128–149 (DRFIAVVHPLRYNKIKRIEHAK). The chain crosses the membrane as a helical span at residues 150–168 (GVCIFVWILVFAQTLPLLI). At 169 to 192 (NPMSKQEAERITCMEYPNFEETKS) the chain is on the extracellular side. The helical transmembrane segment at 193 to 215 (LPWILLGACFIGYVLPLIIILIC) threads the bilayer. Residues 216-241 (YSQICCKLFRTAKQNPLTEKSGVNKK) lie on the Cytoplasmic side of the membrane. The chain crosses the membrane as a helical span at residues 242-265 (ALNTIILIIVVFVLCFTPYHVAII). Residue tyrosine 260 coordinates 7alpha,25-dihydroxycholesterol. At 266–287 (QHMIKKLRFSNFLECSQRHSFQ) the chain is on the extracellular side. The helical transmembrane segment at 288-312 (ISLHFTVCLMNFNCCMDPFIYFFAC) threads the bilayer. Residues 313-361 (KGYKRKVMRMLKRQVSVSISSAVKSAPEENSREMTETQMMIHSKSSNGK) lie on the Cytoplasmic side of the membrane. Serine 328 is modified (phosphoserine). Residues 340–361 (EENSREMTETQMMIHSKSSNGK) are disordered. The segment covering 348–361 (ETQMMIHSKSSNGK) has biased composition (polar residues).

This sequence belongs to the G-protein coupled receptor 1 family. As to quaternary structure, homodimer and heterodimer. Heterodimerizes with CXCR5; leading to modulate the interaction between of CXCL13 and CXCR5. As to expression, expressed abundantly in lymphoid tissues such as spleen and lymph node, and in B- and T-lymphocytes. Also highly expressed in lung, heart and gastrointestinal tract, and weakly expressed in the urogenital system and brain. Expressed in astrocytes.

The protein localises to the cell membrane. Its function is as follows. G-protein coupled receptor expressed in lymphocytes that acts as a chemotactic receptor for B-cells, T-cells, splenic dendritic cells, monocytes/macrophages and astrocytes. Receptor for oxysterol 7-alpha,25-dihydroxycholesterol (7-alpha,25-OHC) and other related oxysterols. Mediates cell positioning and movement of a number of cells by binding the 7-alpha,25-OHC ligand that forms a chemotactic gradient. Binding of 7-alpha,25-OHC mediates the correct localization of B-cells during humoral immune responses. Guides B-cell movement along the B-cell zone-T-cell zone boundary and later to interfollicular and outer follicular regions. Its specific expression during B-cell maturation helps position B-cells appropriately for mounting T-dependent antibody responses. Collaborates with CXCR5 to mediate B-cell migration; probably by forming a heterodimer with CXCR5 that affects the interaction between of CXCL13 and CXCR5. Also acts as a chemotactic receptor for some T-cells upon binding to 7-alpha,25-OHC ligand. Promotes follicular helper T (Tfh) cells differentiation by positioning activated T-cells at the follicle-T-zone interface, promoting contact of newly activated CD4 T-cells with activated dendritic cells and exposing them to Tfh-cell-promoting inducible costimulator (ICOS) ligand. Expression in splenic dendritic cells is required for their homeostasis, localization and ability to induce B- and T-cell responses: GPR183 acts as a chemotactic receptor in dendritic cells that mediates the accumulation of CD4(+) dendritic cells in bridging channels. Regulates migration of astrocytes and is involved in communication between astrocytes and macrophages. Promotes osteoclast precursor migration to bone surfaces. Signals constitutively through G(i)-alpha, but not G(s)-alpha or G(q)-alpha. Signals constitutively also via MAPK1/3 (ERK1/2). This Homo sapiens (Human) protein is G-protein coupled receptor 183.